Consider the following 588-residue polypeptide: Mitochondrial tRNA methylthiotransferase CDK5RAP1 (588 aa).

The transit peptide at 1 to 30 (MHPLRCVLQVQRLSAPFTSMCWVLLRTCRA) directs the protein to the mitochondrion. Disordered stretches follow at residues 33-53 (SVSS…QKDF) and 70-91 (ASVP…YLSG). The region spanning 99-219 (RKVYLETYGC…LPRLLAVVES (121 aa)) is the MTTase N-terminal domain. Residues Cys108, Cys144, Cys182, Cys257, Cys261, and Cys264 each coordinate [4Fe-4S] cluster. In terms of domain architecture, Radical SAM core spans 243–498 (SPSATSAFVS…TVFREEASKA (256 aa)). The TRAM domain occupies 500–575 (KTSVGCSQLV…SQTLKGHILC (76 aa)).

It belongs to the methylthiotransferase family. MiaB subfamily. As to quaternary structure, interacts with CDK5R1 (p35 form). CDK5RAP1, CDK5RAP2 and CDK5RAP3 show competitive binding to CDK5R1. Probably forms a complex with CDK5R1 and CDK5. It depends on [4Fe-4S] cluster as a cofactor. As to expression, expressed in brain, liver, skeletal muscle and heart.

Its subcellular location is the mitochondrion. The enzyme catalyses N(6)-dimethylallyladenosine(37) in tRNA + (sulfur carrier)-SH + AH2 + 2 S-adenosyl-L-methionine = 2-methylsulfanyl-N(6)-dimethylallyladenosine(37) in tRNA + (sulfur carrier)-H + 5'-deoxyadenosine + L-methionine + A + S-adenosyl-L-homocysteine + 2 H(+). Methylthiotransferase that catalyzes the conversion of N6-(dimethylallyl)adenosine (i(6)A) to 2-methylthio-N6-(dimethylallyl)adenosine (ms(2)i(6)A) at position 37 (adjacent to the 3'-end of the anticodon) of four mitochondrial DNA-encoded tRNAs (Ser(UCN), Phe, Tyr and Trp). Essential for efficient and highly accurate protein translation by the ribosome. Specifically inhibits CDK5 activation by CDK5R1. Essential for efficient mitochondrial protein synthesis and respiratory chain. This is Mitochondrial tRNA methylthiotransferase CDK5RAP1 from Mus musculus (Mouse).